The following is a 284-amino-acid chain: Malonyl-[acyl-carrier protein] O-methyltransferase (284 aa).

The protein belongs to the methyltransferase superfamily.

It catalyses the reaction malonyl-[ACP] + S-adenosyl-L-methionine = malonyl-[ACP] methyl ester + S-adenosyl-L-homocysteine. Its pathway is cofactor biosynthesis; biotin biosynthesis. Converts the free carboxyl group of a malonyl-thioester to its methyl ester by transfer of a methyl group from S-adenosyl-L-methionine (SAM). It allows to synthesize pimeloyl-ACP via the fatty acid synthetic pathway. The polypeptide is Malonyl-[acyl-carrier protein] O-methyltransferase (Legionella pneumophila subsp. pneumophila (strain Philadelphia 1 / ATCC 33152 / DSM 7513)).